Consider the following 92-residue polypeptide: Subtilisin inhibitor 1 (92 aa).

Residues 1–12 (QEQGTNPSQEQN) are compositionally biased toward polar residues. Positions 1–31 (QEQGTNPSQEQNVPLPRNYKQALETNTPTKT) are disordered.

It belongs to the protease inhibitor I13 (potato type I serine protease inhibitor) family.

Inhibitor of subtilisin. This chain is Subtilisin inhibitor 1, found in Phaseolus angularis (Azuki bean).